We begin with the raw amino-acid sequence, 171 residues long: Peptide deformylase 1 (171 aa).

2 residues coordinate Fe cation: cysteine 99 and histidine 141. Glutamate 142 is a catalytic residue. Histidine 145 is a binding site for Fe cation.

Belongs to the polypeptide deformylase family. Fe(2+) serves as cofactor.

The catalysed reaction is N-terminal N-formyl-L-methionyl-[peptide] + H2O = N-terminal L-methionyl-[peptide] + formate. Functionally, removes the formyl group from the N-terminal Met of newly synthesized proteins. Requires at least a dipeptide for an efficient rate of reaction. N-terminal L-methionine is a prerequisite for activity but the enzyme has broad specificity at other positions. The protein is Peptide deformylase 1 of Xanthomonas campestris pv. campestris (strain ATCC 33913 / DSM 3586 / NCPPB 528 / LMG 568 / P 25).